The chain runs to 51 residues: Large ribosomal subunit protein eL39z/eL39x (51 aa).

Positions 1–21 (MPSHKSFMIKKKLGKKMRQNR) are disordered. Over residues 7–19 (FMIKKKLGKKMRQ) the composition is skewed to basic residues.

The protein belongs to the eukaryotic ribosomal protein eL39 family.

The protein is Large ribosomal subunit protein eL39z/eL39x (RPL39A) of Arabidopsis thaliana (Mouse-ear cress).